Consider the following 487-residue polypeptide: MFYLCTTLYFKQFTFMSTELFSTLPYKVADITLADFGRKEIDLAEKEMPGLMALREKYGESKPLKGARIMGSLHMTIQTAVLIETLVALGAEVRWCSCNIYSTQDHAAAAIAASGVAVFAWKGETLADYWWCTLQALNFEGGKGPTVIVDDGGDATMMIHVGYEAENNAAVLDKEVHAEDEIELNAILKKVLAEDKERWHRVAAEVRGVSEETTTGVHRLYQMQEEGKLLFPAFNVNDSVTKSKFDNLYGCRESLADGIKRATDVMIAGKVVVVCGYGDVGKGCSHSMRSYGARVLVTEVDPICALQAAMEGFEVVTMEDACKEGNIFVTTTGNIDIIRIDHMEQMKDQAIVCNIGHFDNEIQVDALKHYPGIKRVNIKPQVDRYYFPDGHSIILLADGRLVNLGCATGHPSFVMSNSFTNQTLAQIELFNKKYDINVYRLPKHLDEEVARLHLEKIGVKLTKLTPEQAAYIGVSVDGPYKADHYRY.

The substrate site is built by threonine 76, aspartate 151, and glutamate 212. 213–215 contacts NAD(+); sequence TTT. Substrate-binding residues include lysine 242 and aspartate 246. Residues asparagine 247, 276-281, glutamate 299, asparagine 334, 355-357, and asparagine 403 contribute to the NAD(+) site; these read GYGDVG and IGH.

This sequence belongs to the adenosylhomocysteinase family. Requires NAD(+) as cofactor.

It is found in the cytoplasm. It catalyses the reaction S-adenosyl-L-homocysteine + H2O = L-homocysteine + adenosine. It functions in the pathway amino-acid biosynthesis; L-homocysteine biosynthesis; L-homocysteine from S-adenosyl-L-homocysteine: step 1/1. In terms of biological role, may play a key role in the regulation of the intracellular concentration of adenosylhomocysteine. The protein is Adenosylhomocysteinase of Bacteroides fragilis (strain YCH46).